Reading from the N-terminus, the 123-residue chain is Small ribosomal subunit protein uS12 (123 aa).

Residues 1–28 (MPTIQQLIRKPRQPKVKRSKSMHLEQCP) are disordered. The segment covering 9 to 21 (RKPRQPKVKRSKS) has biased composition (basic residues). Asp89 carries the post-translational modification 3-methylthioaspartic acid.

The protein belongs to the universal ribosomal protein uS12 family. Part of the 30S ribosomal subunit. Contacts proteins S8 and S17. May interact with IF1 in the 30S initiation complex.

Its function is as follows. With S4 and S5 plays an important role in translational accuracy. In terms of biological role, interacts with and stabilizes bases of the 16S rRNA that are involved in tRNA selection in the A site and with the mRNA backbone. Located at the interface of the 30S and 50S subunits, it traverses the body of the 30S subunit contacting proteins on the other side and probably holding the rRNA structure together. The combined cluster of proteins S8, S12 and S17 appears to hold together the shoulder and platform of the 30S subunit. The sequence is that of Small ribosomal subunit protein uS12 from Ruegeria sp. (strain TM1040) (Silicibacter sp.).